The chain runs to 311 residues: GTP cyclohydrolase MptA (311 aa).

It belongs to the GTP cyclohydrolase IV family. In terms of assembly, homodimer. The cofactor is Fe(2+).

The catalysed reaction is GTP + H2O = 7,8-dihydroneopterin 2',3'-cyclic phosphate + formate + diphosphate + H(+). Its pathway is cofactor biosynthesis; 5,6,7,8-tetrahydromethanopterin biosynthesis. Functionally, converts GTP to 7,8-dihydro-D-neopterin 2',3'-cyclic phosphate, the first intermediate in the biosynthesis of coenzyme methanopterin. The polypeptide is GTP cyclohydrolase MptA (Methanobrevibacter smithii (strain ATCC 35061 / DSM 861 / OCM 144 / PS)).